The primary structure comprises 637 residues: CREB-regulated transcription coactivator 3 (637 aa).

Ser66 is subject to Phosphoserine. Over residues 105-115 (NRLHSSHHRPI) the composition is skewed to basic residues. Disordered regions lie at residues 105–184 (NRLH…SLQD) and 269–288 (HFPS…YANI). Position 133 is a phosphoserine (Ser133). Phosphothreonine is present on Thr143. Ser145 is modified (phosphoserine; by SIK2). Residues 145–159 (SDSALHTSASSTKSQ) show a composition bias toward polar residues. A Phosphothreonine modification is found at Thr151. Ser293 carries the post-translational modification Phosphoserine. Positions 299–462 (AMTHLGISGS…QNYQPPSPVP (164 aa)) are disordered. Polar residues predominate over residues 309–337 (PGMQNTRSNPSIQATMNNNSLASNVNSHT). Over residues 344-365 (PALHPSLRLSSLSNPSLPTSAL) the composition is skewed to low complexity. Phosphoserine occurs at positions 377 and 396. Positions 377 to 395 (SPLTLTPGSESNRSISNQF) are enriched in polar residues. A compositionally biased stretch (low complexity) spans 396–407 (SPTSPMNMPPNS). Over residues 418-429 (SLPPLEPPPPYP) the composition is skewed to pro residues. The span at 430-447 (LYSDQPQPHLHHTQQQMH) shows a compositional bias: low complexity. Ser561 bears the Phosphoserine mark. The tract at residues 615 to 637 (MLSDPDMVLPDPSIEDSFRSDKL) is disordered.

The protein belongs to the TORC family. In terms of assembly, binding, as a tetramer, through its N-terminal region, with the bZIP domain of creb1 enhances recruitment of taf4 to the promoter. 'Arg-300' in the bZIP domain of creb1 is essential for this interaction.

It is found in the nucleus. Its subcellular location is the cytoplasm. In terms of biological role, transcriptional coactivator for creb1 which activates transcription through both consensus and variant cAMP response element (CRE) sites. Acts as a coactivator, in the SIK/TORC signaling pathway, being active when dephosphorylated and acts independently of creb1 'Ser-119' phosphorylation. Enhances the interaction of creb1 with taf4. Regulates the expression of specific CREB-activated genes such as the steroidogenic gene, StAR. Potent coactivator of ppargc1a and inducer of mitochondrial biogenesis in muscle cells. This is CREB-regulated transcription coactivator 3 (crtc3) from Xenopus tropicalis (Western clawed frog).